The primary structure comprises 220 residues: Carbonic anhydrase (220 aa).

Cysteine 39, aspartate 41, histidine 98, and cysteine 101 together coordinate Zn(2+).

The protein belongs to the beta-class carbonic anhydrase family. The cofactor is Zn(2+).

It carries out the reaction hydrogencarbonate + H(+) = CO2 + H2O. The chain is Carbonic anhydrase (cynT) from Pseudomonas aeruginosa (strain ATCC 15692 / DSM 22644 / CIP 104116 / JCM 14847 / LMG 12228 / 1C / PRS 101 / PAO1).